Here is a 291-residue protein sequence, read N- to C-terminus: 4-hydroxy-tetrahydrodipicolinate synthase (291 aa).

Thr44 contacts pyruvate. The active-site Proton donor/acceptor is the Tyr132. The active-site Schiff-base intermediate with substrate is Lys160. Val202 contributes to the pyruvate binding site.

Belongs to the DapA family. In terms of assembly, homotetramer; dimer of dimers.

The protein resides in the cytoplasm. The enzyme catalyses L-aspartate 4-semialdehyde + pyruvate = (2S,4S)-4-hydroxy-2,3,4,5-tetrahydrodipicolinate + H2O + H(+). It functions in the pathway amino-acid biosynthesis; L-lysine biosynthesis via DAP pathway; (S)-tetrahydrodipicolinate from L-aspartate: step 3/4. Its function is as follows. Catalyzes the condensation of (S)-aspartate-beta-semialdehyde [(S)-ASA] and pyruvate to 4-hydroxy-tetrahydrodipicolinate (HTPA). In Clostridium perfringens (strain SM101 / Type A), this protein is 4-hydroxy-tetrahydrodipicolinate synthase.